We begin with the raw amino-acid sequence, 509 residues long: tRNA-2-methylthio-N(6)-dimethylallyladenosine synthase (509 aa).

Over residues 1 to 13 (MNEQQRLASQQAN) the composition is skewed to polar residues. The interval 1-26 (MNEQQRLASQQANSSKKKEEKDYSKY) is disordered. The span at 16–25 (KKKEEKDYSK) shows a compositional bias: basic and acidic residues. The MTTase N-terminal domain occupies 66-184 (RKFYIRTYGC…LPYILKDAMF (119 aa)). Residues C75, C111, C145, C221, C225, and C228 each coordinate [4Fe-4S] cluster. One can recognise a Radical SAM core domain in the interval 207 to 437 (RRGDIKAWVN…NALVNKLAIE (231 aa)). The 64-residue stretch at 440-503 (NRYKGQIVEV…TWSLNGELVE (64 aa)) folds into the TRAM domain.

This sequence belongs to the methylthiotransferase family. MiaB subfamily. In terms of assembly, monomer. The cofactor is [4Fe-4S] cluster.

It is found in the cytoplasm. It catalyses the reaction N(6)-dimethylallyladenosine(37) in tRNA + (sulfur carrier)-SH + AH2 + 2 S-adenosyl-L-methionine = 2-methylsulfanyl-N(6)-dimethylallyladenosine(37) in tRNA + (sulfur carrier)-H + 5'-deoxyadenosine + L-methionine + A + S-adenosyl-L-homocysteine + 2 H(+). Functionally, catalyzes the methylthiolation of N6-(dimethylallyl)adenosine (i(6)A), leading to the formation of 2-methylthio-N6-(dimethylallyl)adenosine (ms(2)i(6)A) at position 37 in tRNAs that read codons beginning with uridine. This is tRNA-2-methylthio-N(6)-dimethylallyladenosine synthase from Bacillus cereus (strain ATCC 10987 / NRS 248).